Consider the following 471-residue polypeptide: UDP-N-acetylmuramoylalanine--D-glutamate ligase (471 aa).

An ATP-binding site is contributed by 122–128 (GSNAKST).

The protein belongs to the MurCDEF family.

The protein localises to the cytoplasm. It catalyses the reaction UDP-N-acetyl-alpha-D-muramoyl-L-alanine + D-glutamate + ATP = UDP-N-acetyl-alpha-D-muramoyl-L-alanyl-D-glutamate + ADP + phosphate + H(+). Its pathway is cell wall biogenesis; peptidoglycan biosynthesis. Its function is as follows. Cell wall formation. Catalyzes the addition of glutamate to the nucleotide precursor UDP-N-acetylmuramoyl-L-alanine (UMA). This chain is UDP-N-acetylmuramoylalanine--D-glutamate ligase, found in Psychrobacter cryohalolentis (strain ATCC BAA-1226 / DSM 17306 / VKM B-2378 / K5).